We begin with the raw amino-acid sequence, 146 residues long: Transcriptional regulator MraZ (146 aa).

SpoVT-AbrB domains lie at 5–51 (NHPT…PLQE) and 80–123 (GQMV…NHEA).

It belongs to the MraZ family. Forms oligomers.

It localises to the cytoplasm. The protein localises to the nucleoid. This Acidobacterium capsulatum (strain ATCC 51196 / DSM 11244 / BCRC 80197 / JCM 7670 / NBRC 15755 / NCIMB 13165 / 161) protein is Transcriptional regulator MraZ.